Consider the following 510-residue polypeptide: Probable allantoinase 2 (510 aa).

Positions 97, 99, 185, 228, 287, and 360 each coordinate Zn(2+). Lys185 is subject to N6-carboxylysine.

It belongs to the metallo-dependent hydrolases superfamily. Allantoinase family. In terms of assembly, homotetramer. It depends on Zn(2+) as a cofactor. Post-translationally, carboxylation allows a single lysine to coordinate two zinc ions.

The enzyme catalyses (S)-allantoin + H2O = allantoate + H(+). Its pathway is nitrogen metabolism; (S)-allantoin degradation; allantoate from (S)-allantoin: step 1/1. The chain is Probable allantoinase 2 (allB2) from Dictyostelium discoideum (Social amoeba).